A 124-amino-acid chain; its full sequence is Small ribosomal subunit protein uS12 (124 aa).

Position 89 is a 3-methylthioaspartic acid (aspartate 89).

The protein belongs to the universal ribosomal protein uS12 family. In terms of assembly, part of the 30S ribosomal subunit. Contacts proteins S8 and S17. May interact with IF1 in the 30S initiation complex.

Its function is as follows. With S4 and S5 plays an important role in translational accuracy. Functionally, interacts with and stabilizes bases of the 16S rRNA that are involved in tRNA selection in the A site and with the mRNA backbone. Located at the interface of the 30S and 50S subunits, it traverses the body of the 30S subunit contacting proteins on the other side and probably holding the rRNA structure together. The combined cluster of proteins S8, S12 and S17 appears to hold together the shoulder and platform of the 30S subunit. This chain is Small ribosomal subunit protein uS12, found in Proteus mirabilis (strain HI4320).